Consider the following 239-residue polypeptide: 1-(5-phosphoribosyl)-5-[(5-phosphoribosylamino)methylideneamino] imidazole-4-carboxamide isomerase (239 aa).

Asp-8 serves as the catalytic Proton acceptor. The active-site Proton donor is the Asp-129.

It belongs to the HisA/HisF family.

The protein resides in the cytoplasm. It carries out the reaction 1-(5-phospho-beta-D-ribosyl)-5-[(5-phospho-beta-D-ribosylamino)methylideneamino]imidazole-4-carboxamide = 5-[(5-phospho-1-deoxy-D-ribulos-1-ylimino)methylamino]-1-(5-phospho-beta-D-ribosyl)imidazole-4-carboxamide. Its pathway is amino-acid biosynthesis; L-histidine biosynthesis; L-histidine from 5-phospho-alpha-D-ribose 1-diphosphate: step 4/9. The chain is 1-(5-phosphoribosyl)-5-[(5-phosphoribosylamino)methylideneamino] imidazole-4-carboxamide isomerase from Bacillus cereus (strain AH187).